The chain runs to 291 residues: Tryptophan synthase alpha chain (291 aa).

Active-site proton acceptor residues include E69 and D80.

Belongs to the TrpA family. In terms of assembly, tetramer of two alpha and two beta chains.

The enzyme catalyses (1S,2R)-1-C-(indol-3-yl)glycerol 3-phosphate + L-serine = D-glyceraldehyde 3-phosphate + L-tryptophan + H2O. It functions in the pathway amino-acid biosynthesis; L-tryptophan biosynthesis; L-tryptophan from chorismate: step 5/5. In terms of biological role, the alpha subunit is responsible for the aldol cleavage of indoleglycerol phosphate to indole and glyceraldehyde 3-phosphate. In Bifidobacterium longum (strain NCC 2705), this protein is Tryptophan synthase alpha chain.